The sequence spans 150 residues: Large ribosomal subunit protein bL9 (150 aa).

The protein belongs to the bacterial ribosomal protein bL9 family.

Its function is as follows. Binds to the 23S rRNA. This chain is Large ribosomal subunit protein bL9, found in Hydrogenovibrio crunogenus (strain DSM 25203 / XCL-2) (Thiomicrospira crunogena).